The sequence spans 772 residues: MRLSSLLALLRPALPLILGLSLGCSLSLLRVSWIQGEGEDPCVEAVGERGGPQNPDSRARLDQSDEDFKPRIVPYYRDPNKPYKKVLRTRYIQTELGSRERLLVAVLTSRATLSTLAVAVNRTVAHHFPRLLYFTGQRGARAPAGMQVVSHGDERPAWLMSETLRHLHTHFGADYDWFFIMQDDTYVQAPRLAALAGHLSINQDLYLGRAEEFIGAGEQARYCHGGFGYLLSRSLLLRLRPHLDGCRGDILSARPDEWLGRCLIDSLGVGCVSQHQGQQYRSFELAKNRDPEKEGSSAFLSAFAVHPVSEGTLMYRLHKRFSALELERAYSEIEQLQAQIRNLTVLTPEGEAGLSWPVGLPAPFTPHSRFEVLGWDYFTEQHTFSCADGAPKCPLQGASRADVGDALETALEQLNRRYQPRLRFQKQRLLNGYRRFDPARGMEYTLDLLLECVTQRGHRRALARRVSLLRPLSRVEILPMPYVTEATRVQLVLPLLVAEAAAAPAFLEAFAANVLEPREHALLTLLLVYGPREGGRGAPDPFLGVKAAAAELERRYPGTRLAWLAVRAEAPSQVRLMDVVSKKHPVDTLFFLTTVWTRPGPEVLNRCRMNAISGWQAFFPVHFQEFNPALSPQRSPPGPPGAGPDPPSPPGADPSRGAPIGGRFDRQASAEGCFYNADYLAARARLAGELAGQEEEEALEGLEVMDVFLRFSGLHLFRAVEPGLVQKFSLRDCSPRLSEELYHRCRLSNLEGLGGRAQLAMALFEQEQANST.

Residues 1–6 (MRLSSL) lie on the Cytoplasmic side of the membrane. A helical; Signal-anchor for type II membrane protein transmembrane segment spans residues 7–29 (LALLRPALPLILGLSLGCSLSLL). Topologically, residues 30–772 (RVSWIQGEGE…LFEQEQANST (743 aa)) are lumenal. 2 N-linked (GlcNAc...) asparagine glycosylation sites follow: Asn121 and Asn342. The tract at residues 629–662 (ALSPQRSPPGPPGAGPDPPSPPGADPSRGAPIGG) is disordered. Positions 634-652 (RSPPGPPGAGPDPPSPPGA) are enriched in pro residues.

It belongs to the chondroitin N-acetylgalactosaminyltransferase family. As to expression, ubiquitous. Highly expressed in placenta, small intestine and pancreas.

The protein resides in the golgi apparatus. Its subcellular location is the golgi stack membrane. It catalyses the reaction 3-O-(beta-D-GalNAc-(1-&gt;4)-beta-D-GlcA-(1-&gt;3)-beta-D-Gal-(1-&gt;3)-beta-D-Gal-(1-&gt;4)-beta-D-Xyl)-L-seryl-[protein] + UDP-alpha-D-glucuronate = 3-O-(beta-D-GlcA-(1-&gt;3)-beta-D-GalNAc-(1-&gt;4)-beta-D-GlcA-(1-&gt;3)-beta-D-Gal-(1-&gt;3)-beta-D-Gal-(1-&gt;4)-beta-D-Xyl)-L-seryl-[protein] + UDP + H(+). The enzyme catalyses 3-O-{[beta-D-GalNAc-(1-&gt;4)-beta-D-GlcA-(1-&gt;3)](n)-beta-D-GalNAc-(1-&gt;4)-beta-D-GlcA-(1-&gt;3)-beta-D-Gal-(1-&gt;3)-beta-D-Gal-(1-&gt;4)-beta-D-Xyl}-L-seryl-[protein] + UDP-alpha-D-glucuronate = 3-O-{beta-D-GlcA-(1-&gt;3)-[beta-D-GalNAc-(1-&gt;4)-beta-D-GlcA-(1-&gt;3)](n)-beta-D-GalNAc-(1-&gt;4)-beta-D-GlcA-(1-&gt;3)-beta-D-Gal-(1-&gt;3)-beta-D-Gal-(1-&gt;4)-beta-D-Xyl}-L-seryl-[protein] + UDP + H(+). In terms of biological role, transfers glucuronic acid (GlcUA) from UDP-GlcUA to N-acetylgalactosamine residues on the non-reducing end of the elongating chondroitin polymer. Has no N-acetylgalactosaminyltransferase activity. This chain is Chondroitin sulfate glucuronyltransferase (CHPF2), found in Homo sapiens (Human).